We begin with the raw amino-acid sequence, 155 residues long: MSDKNEGYKVIADNRQARYLYEILETYEAGIELTGTEVKSIRAGKVNLQDGYALLRNGEAWLINIHISPYNASGQYFNHEPRRTRKLLLHRQELRKLIGKVEQQGLTLIPLKMYLKRGWVKVSIALGKGKKLHDKREDLKRRQDQRDIQRAMKSY.

The segment at 136–155 is disordered; that stretch reads REDLKRRQDQRDIQRAMKSY.

The protein belongs to the SmpB family.

The protein resides in the cytoplasm. Functionally, required for rescue of stalled ribosomes mediated by trans-translation. Binds to transfer-messenger RNA (tmRNA), required for stable association of tmRNA with ribosomes. tmRNA and SmpB together mimic tRNA shape, replacing the anticodon stem-loop with SmpB. tmRNA is encoded by the ssrA gene; the 2 termini fold to resemble tRNA(Ala) and it encodes a 'tag peptide', a short internal open reading frame. During trans-translation Ala-aminoacylated tmRNA acts like a tRNA, entering the A-site of stalled ribosomes, displacing the stalled mRNA. The ribosome then switches to translate the ORF on the tmRNA; the nascent peptide is terminated with the 'tag peptide' encoded by the tmRNA and targeted for degradation. The ribosome is freed to recommence translation, which seems to be the essential function of trans-translation. The sequence is that of SsrA-binding protein from Nostoc punctiforme (strain ATCC 29133 / PCC 73102).